The chain runs to 311 residues: Methionyl-tRNA formyltransferase (311 aa).

Residue S110 to P113 coordinates (6S)-5,6,7,8-tetrahydrofolate.

This sequence belongs to the Fmt family.

The enzyme catalyses L-methionyl-tRNA(fMet) + (6R)-10-formyltetrahydrofolate = N-formyl-L-methionyl-tRNA(fMet) + (6S)-5,6,7,8-tetrahydrofolate + H(+). In terms of biological role, attaches a formyl group to the free amino group of methionyl-tRNA(fMet). The formyl group appears to play a dual role in the initiator identity of N-formylmethionyl-tRNA by promoting its recognition by IF2 and preventing the misappropriation of this tRNA by the elongation apparatus. This chain is Methionyl-tRNA formyltransferase, found in Streptococcus pyogenes serotype M2 (strain MGAS10270).